The sequence spans 489 residues: Type II restriction enzyme Sau3AI (489 aa).

Mg(2+) serves as cofactor.

It carries out the reaction Endonucleolytic cleavage of DNA to give specific double-stranded fragments with terminal 5'-phosphates.. In terms of biological role, an E and P subtype restriction enzyme that recognizes the double-stranded sequence 5'-GATC-3' and cleaves before G-1. This is Type II restriction enzyme Sau3AI (sau3AIR) from Staphylococcus aureus.